The primary structure comprises 92 residues: Putative pterin-4-alpha-carbinolamine dehydratase (92 aa).

Belongs to the pterin-4-alpha-carbinolamine dehydratase family.

It catalyses the reaction (4aS,6R)-4a-hydroxy-L-erythro-5,6,7,8-tetrahydrobiopterin = (6R)-L-erythro-6,7-dihydrobiopterin + H2O. The sequence is that of Putative pterin-4-alpha-carbinolamine dehydratase from Natronomonas pharaonis (strain ATCC 35678 / DSM 2160 / CIP 103997 / JCM 8858 / NBRC 14720 / NCIMB 2260 / Gabara) (Halobacterium pharaonis).